The primary structure comprises 209 residues: Small ribosomal subunit protein uS4 (209 aa).

Positions 1-13 are enriched in basic residues; it reads MSTKSRTRSKTRL. Disordered regions lie at residues 1–20 and 28–49; these read MSTKSRTRSKTRLSRALGIP and YLEKRPYAPGEHGRSKRKQDSD. The 66-residue stretch at 95-160 folds into the S4 RNA-binding domain; that stretch reads QRLDALVVRS…TEPFQVAAAG (66 aa).

Belongs to the universal ribosomal protein uS4 family. Part of the 30S ribosomal subunit. Contacts protein S5. The interaction surface between S4 and S5 is involved in control of translational fidelity.

Its function is as follows. One of the primary rRNA binding proteins, it binds directly to 16S rRNA where it nucleates assembly of the body of the 30S subunit. With S5 and S12 plays an important role in translational accuracy. The sequence is that of Small ribosomal subunit protein uS4 from Clavibacter sepedonicus (Clavibacter michiganensis subsp. sepedonicus).